The chain runs to 86 residues: Small ribosomal subunit protein bS20 (86 aa).

Belongs to the bacterial ribosomal protein bS20 family.

Functionally, binds directly to 16S ribosomal RNA. This chain is Small ribosomal subunit protein bS20, found in Bifidobacterium longum (strain DJO10A).